The primary structure comprises 602 residues: DEAD-box ATP-dependent RNA helicase 52A (602 aa).

The disordered stretch occupies residues 9–31 (KSVEAGGEPGGGGGGAWSTVSRS). The span at 15–24 (GEPGGGGGGA) shows a compositional bias: gly residues. The Q motif signature appears at 84 to 112 (DGFEAAGLVEAVLRNVARCGYESPTPVQR). A Helicase ATP-binding domain is found at 115–305 (MPIALAGRDL…SDFLSNYIFI (191 aa)). Residue 128–135 (AQTGSGKT) coordinates ATP. A DEAD box motif is present at residues 249 to 252 (DEAD). The region spanning 328–485 (EKRGYLLDLL…DVPDWLVQYA (158 aa)) is the Helicase C-terminal domain. Disordered regions lie at residues 492-521 (GSSY…SGGG) and 552-602 (RGGG…SGWD). A compositionally biased stretch (gly residues) spans 552 to 574 (RGGGYSRGGRGGYSGGGGGGGGD).

The protein belongs to the DEAD box helicase family. DDX3/DED1 subfamily.

It catalyses the reaction ATP + H2O = ADP + phosphate + H(+). This chain is DEAD-box ATP-dependent RNA helicase 52A, found in Oryza sativa subsp. japonica (Rice).